A 534-amino-acid chain; its full sequence is Bifunctional purine biosynthesis protein PurH (534 aa).

The MGS-like domain maps to 6 to 151 (TRLPIRRALI…KNHKDVAIVV (146 aa)).

This sequence belongs to the PurH family.

It catalyses the reaction (6R)-10-formyltetrahydrofolate + 5-amino-1-(5-phospho-beta-D-ribosyl)imidazole-4-carboxamide = 5-formamido-1-(5-phospho-D-ribosyl)imidazole-4-carboxamide + (6S)-5,6,7,8-tetrahydrofolate. The catalysed reaction is IMP + H2O = 5-formamido-1-(5-phospho-D-ribosyl)imidazole-4-carboxamide. The protein operates within purine metabolism; IMP biosynthesis via de novo pathway; 5-formamido-1-(5-phospho-D-ribosyl)imidazole-4-carboxamide from 5-amino-1-(5-phospho-D-ribosyl)imidazole-4-carboxamide (10-formyl THF route): step 1/1. It participates in purine metabolism; IMP biosynthesis via de novo pathway; IMP from 5-formamido-1-(5-phospho-D-ribosyl)imidazole-4-carboxamide: step 1/1. This Pseudomonas syringae pv. tomato (strain ATCC BAA-871 / DC3000) protein is Bifunctional purine biosynthesis protein PurH.